We begin with the raw amino-acid sequence, 120 residues long: NAD(P)H-quinone oxidoreductase subunit 3, chloroplastic (120 aa).

A run of 3 helical transmembrane segments spans residues 9-29, 64-84, and 88-108; these read IFWTFLIIASLIPILAFWISG, MFALVFVVFDVETVFLYPWAM, and VLGVSVFIEAFIFVLILVVGL.

This sequence belongs to the complex I subunit 3 family. As to quaternary structure, NDH is composed of at least 16 different subunits, 5 of which are encoded in the nucleus.

The protein resides in the plastid. It localises to the chloroplast thylakoid membrane. The catalysed reaction is a plastoquinone + NADH + (n+1) H(+)(in) = a plastoquinol + NAD(+) + n H(+)(out). It carries out the reaction a plastoquinone + NADPH + (n+1) H(+)(in) = a plastoquinol + NADP(+) + n H(+)(out). In terms of biological role, NDH shuttles electrons from NAD(P)H:plastoquinone, via FMN and iron-sulfur (Fe-S) centers, to quinones in the photosynthetic chain and possibly in a chloroplast respiratory chain. The immediate electron acceptor for the enzyme in this species is believed to be plastoquinone. Couples the redox reaction to proton translocation, and thus conserves the redox energy in a proton gradient. The protein is NAD(P)H-quinone oxidoreductase subunit 3, chloroplastic of Agrostis stolonifera (Creeping bentgrass).